The chain runs to 122 residues: S-adenosylmethionine decarboxylase proenzyme (122 aa).

The Schiff-base intermediate with substrate; via pyruvic acid role is filled by serine 69. Residue serine 69 is modified to Pyruvic acid (Ser); by autocatalysis. Histidine 74 (proton acceptor; for processing activity) is an active-site residue. The Proton donor; for catalytic activity role is filled by cysteine 89.

The protein belongs to the prokaryotic AdoMetDC family. Type 1 subfamily. As to quaternary structure, heterotetramer of two alpha and two beta chains arranged as a dimer of alpha/beta heterodimers. Requires pyruvate as cofactor. In terms of processing, is synthesized initially as an inactive proenzyme. Formation of the active enzyme involves a self-maturation process in which the active site pyruvoyl group is generated from an internal serine residue via an autocatalytic post-translational modification. Two non-identical subunits are generated from the proenzyme in this reaction, and the pyruvate is formed at the N-terminus of the alpha chain, which is derived from the carboxyl end of the proenzyme. The post-translation cleavage follows an unusual pathway, termed non-hydrolytic serinolysis, in which the side chain hydroxyl group of the serine supplies its oxygen atom to form the C-terminus of the beta chain, while the remainder of the serine residue undergoes an oxidative deamination to produce ammonia and the pyruvoyl group blocking the N-terminus of the alpha chain.

It catalyses the reaction S-adenosyl-L-methionine + H(+) = S-adenosyl 3-(methylsulfanyl)propylamine + CO2. It functions in the pathway amine and polyamine biosynthesis; S-adenosylmethioninamine biosynthesis; S-adenosylmethioninamine from S-adenosyl-L-methionine: step 1/1. Functionally, catalyzes the decarboxylation of S-adenosylmethionine to S-adenosylmethioninamine (dcAdoMet), the propylamine donor required for the synthesis of the polyamines spermine and spermidine from the diamine putrescine. This Saccharolobus islandicus (strain L.S.2.15 / Lassen #1) (Sulfolobus islandicus) protein is S-adenosylmethionine decarboxylase proenzyme.